A 97-amino-acid chain; its full sequence is Small ribosomal subunit protein bS20 (97 aa).

Belongs to the bacterial ribosomal protein bS20 family.

Binds directly to 16S ribosomal RNA. This Prochlorococcus marinus (strain MIT 9301) protein is Small ribosomal subunit protein bS20.